A 40-amino-acid polypeptide reads, in one-letter code: SDGRNDAAKAFDLISSTVKKGCCSHPACAGNNQHICGRRR.

The propeptide occupies 1 to 20 (SDGRNDAAKAFDLISSTVKK). 2 disulfide bridges follow: cysteine 22–cysteine 28 and cysteine 23–cysteine 36. The tract at residues 24–26 (SHP) is ser-Xaa-Pro motif, crucial for potent interaction with nAChR. Residue cysteine 36 is modified to Cysteine amide.

In terms of tissue distribution, expressed by the venom duct.

It is found in the secreted. In terms of biological role, alpha-conotoxins bind to the nicotinic acetylcholine receptors (nAChR) and inhibit them. This toxin reversibly blocks neuronal nAChRs (alpha-3/beta-2 = alpha-6 or -3/beta-2 or -3 &gt; alpha-3/beta-4 = alpha-4/beta-2). The polypeptide is Alpha-conotoxin GIC (Conus geographus (Geography cone)).